The chain runs to 405 residues: Argininosuccinate synthase (405 aa).

ATP contacts are provided by residues 10 to 18 (AYSGGLDTS) and alanine 37. Tyrosine 88 and serine 93 together coordinate L-citrulline. Position 118 (glycine 118) interacts with ATP. Residues threonine 120, asparagine 124, and aspartate 125 each coordinate L-aspartate. Residue asparagine 124 coordinates L-citrulline. L-citrulline contacts are provided by arginine 128, serine 179, serine 188, glutamate 264, and tyrosine 276.

It belongs to the argininosuccinate synthase family. Type 1 subfamily. Homotetramer.

It localises to the cytoplasm. It carries out the reaction L-citrulline + L-aspartate + ATP = 2-(N(omega)-L-arginino)succinate + AMP + diphosphate + H(+). Its pathway is amino-acid biosynthesis; L-arginine biosynthesis; L-arginine from L-ornithine and carbamoyl phosphate: step 2/3. In Stutzerimonas stutzeri (strain A1501) (Pseudomonas stutzeri), this protein is Argininosuccinate synthase.